Consider the following 1092-residue polypeptide: Elongation factor 3 (1092 aa).

Residue Val92 coordinates ADP. HEAT repeat units follow at residues 95 to 133 (MVKT…SPVS), 138 to 175 (PYMI…RLTP), 177 to 214 (ATKQ…TAPR), 218 to 255 (TAVP…LINN), 257 to 293 (DIEK…EVLP), 294 to 331 (PTLA…LVEK), and 333 to 370 (QIIA…KILT). Position 454 (Glu454) interacts with ADP. ABC transporter domains are found at residues 486–704 (EELC…YYEL) and 730–1044 (LKVQ…DKNK). ADP-binding residues include Asn766, Glu973, Asn976, and His1002. Disordered regions lie at residues 1023–1044 (TPTG…DKNK) and 1063–1092 (SKLS…DDDE). Positions 1063-1075 (SKLSGKDLRKKRK) are enriched in basic residues. Over residues 1076–1086 (EREARRKRGEE) the composition is skewed to basic and acidic residues.

Belongs to the ABC transporter superfamily. ABCF family. EF3 subfamily.

It is found in the cytoplasm. The protein localises to the cytosol. It carries out the reaction ATP + H2O = ADP + phosphate + H(+). Its pathway is protein biosynthesis; polypeptide chain elongation. Functionally, ribosome-dependent ATPase that functions in cytoplasmic translation elongation. Required for the ATP-dependent release of deacylated tRNA from the ribosomal E-site during protein biosynthesis. Stimulates the eEF1A-dependent binding of aminoacyl-tRNA to the ribosomal A-site, which has reduced affinity for tRNA as long as the E-site is occupied. Assists translation termination by stimulating the release of nascent protein from the ribosome by release factors. The polypeptide is Elongation factor 3 (Gonapodya prolifera (strain JEL478) (Monoblepharis prolifera)).